The primary structure comprises 254 residues: Imidazole glycerol phosphate synthase subunit HisF (254 aa).

Catalysis depends on residues D12 and D131.

It belongs to the HisA/HisF family. Heterodimer of HisH and HisF.

It is found in the cytoplasm. It catalyses the reaction 5-[(5-phospho-1-deoxy-D-ribulos-1-ylimino)methylamino]-1-(5-phospho-beta-D-ribosyl)imidazole-4-carboxamide + L-glutamine = D-erythro-1-(imidazol-4-yl)glycerol 3-phosphate + 5-amino-1-(5-phospho-beta-D-ribosyl)imidazole-4-carboxamide + L-glutamate + H(+). It functions in the pathway amino-acid biosynthesis; L-histidine biosynthesis; L-histidine from 5-phospho-alpha-D-ribose 1-diphosphate: step 5/9. IGPS catalyzes the conversion of PRFAR and glutamine to IGP, AICAR and glutamate. The HisF subunit catalyzes the cyclization activity that produces IGP and AICAR from PRFAR using the ammonia provided by the HisH subunit. This Rhizorhabdus wittichii (strain DSM 6014 / CCUG 31198 / JCM 15750 / NBRC 105917 / EY 4224 / RW1) (Sphingomonas wittichii) protein is Imidazole glycerol phosphate synthase subunit HisF.